The following is a 624-amino-acid chain: Methyl-accepting chemotaxis protein McpG (624 aa).

The helical transmembrane segment at 11–31 threads the bilayer; sequence ILLAASLIVILAFSLFTLYND. A Cache domain is found at 36 to 254; it reads NAIREDLENY…GLPSANWYIG (219 aa). A helical membrane pass occupies residues 272-292; it reads SAVIATVVAVVIIIGLLGLLI. Positions 293–347 constitute an HAMP domain; it reads RVLMQPLHTMTRAMEDIAEGEGDLTKRLHIHSHDEFGVLGNAFNRFVERIHSSIR. The Methyl-accepting transducer domain maps to 352–588; sequence ATEQVNEVAL…AINMDINEIN (237 aa).

It belongs to the methyl-accepting chemotaxis (MCP) protein family.

The protein localises to the cell membrane. Functionally, chemotactic-signal transducers respond to changes in the concentration of attractants and repellents in the environment, transduce a signal from the outside to the inside of the cell, and facilitate sensory adaptation through the variation of the level of methylation. McpG is a specific gamma-aminobutyric acid (GABA) chemoreceptor that recognizes GABA over a wide range of environmental conditions. Contributes to attraction to and colonization of plant roots. The polypeptide is Methyl-accepting chemotaxis protein McpG (Pseudomonas putida (strain ATCC 47054 / DSM 6125 / CFBP 8728 / NCIMB 11950 / KT2440)).